A 494-amino-acid chain; its full sequence is MGQHILAIDQGTTSSRSIIFSPKRSIDAIAQQEFSQKYPKDGWVEHDPEEIWESVVSTLKEVFNKCSVAPSDIAAIGITNQRETTLVWDKHSGKPVYNAIVWQDRRTAQYCRDFSEDEAFVSYITEATGLLLDPYFSATKIAWILDNVEGAREKAENGDLLFGTVDSYLIWRLTGGESHKTDATNASRTMLFDIHNQCWDEKLLSKFNIPASMLPEVMDCAADFGVIKEEIIGRAIPIQGVAGDQQAALVGQACFEKGMAKSTYGTGCFMILNTGDAPLQSKNRLLTTVGYRLNGKTTYALEGSIFMAGATVQWLRDGLKLIDDAAESEALAQRAREDNGVFLVPAFTGLGAPYWDPDARGAILGLTRDTGISEIVAAGLQSVCYQTKDLQKAMESDGARPTTIRVDGGMSRNDWVMGFLSDILGAEVERPEITETTALGAAFLAGLQAGVFNSIDDLTHCWKSDSVFTPRLTKQERDQAYDGWKSAVARIRCS.

Thr12 provides a ligand contact to ADP. Positions 12, 13, and 14 each coordinate ATP. Thr12 is a sn-glycerol 3-phosphate binding site. Residue Arg16 coordinates ADP. Sn-glycerol 3-phosphate contacts are provided by Arg82, Glu83, Tyr135, and Asp244. The glycerol site is built by Arg82, Glu83, Tyr135, Asp244, and Gln245. Residues Thr266 and Gly309 each contribute to the ADP site. Thr266, Gly309, Gln313, and Gly409 together coordinate ATP. ADP is bound by residues Gly409 and Asn413.

The protein belongs to the FGGY kinase family.

The catalysed reaction is glycerol + ATP = sn-glycerol 3-phosphate + ADP + H(+). The protein operates within polyol metabolism; glycerol degradation via glycerol kinase pathway; sn-glycerol 3-phosphate from glycerol: step 1/1. Its activity is regulated as follows. Inhibited by fructose 1,6-bisphosphate (FBP). Its function is as follows. Key enzyme in the regulation of glycerol uptake and metabolism. Catalyzes the phosphorylation of glycerol to yield sn-glycerol 3-phosphate. This is Glycerol kinase from Alteromonas mediterranea (strain DSM 17117 / CIP 110805 / LMG 28347 / Deep ecotype).